The sequence spans 322 residues: L-asparaginase (322 aa).

The Asparaginase/glutaminase domain occupies 3-322 (KKVALITTGG…KEGIKDKFCY (320 aa)). Thr13 serves as the catalytic O-isoaspartyl threonine intermediate. Residues Ser56 and 89-90 (TD) each bind substrate.

The protein belongs to the asparaginase 1 family. Homotetramer.

The protein resides in the cytoplasm. The enzyme catalyses L-asparagine + H2O = L-aspartate + NH4(+). The chain is L-asparaginase (ansA) from Bacillus licheniformis.